Here is a 497-residue protein sequence, read N- to C-terminus: Keratin, type II cytoskeletal 8 (497 aa).

Residues 2–108 form a head region; that stretch reads TSYQRTVTVR…DPRIGQVRLE (107 aa). The interval 109–149 is coil 1A; sequence EKEQIKTLNNQFAGFIDKVRYLEQQNKLLETKWQLLQNQTT. The 313-residue stretch at 109 to 421 folds into the IF rod domain; the sequence is EKEQIKTLNN…KLLEGEESRL (313 aa). Residues 145 to 162 form a linker 1 region; that stretch reads QNQTTPSRSNLDSMFEAY. Residues 163-254 form a coil 1B region; it reads ISNLRRQLDT…QIYDEEIREL (92 aa). The segment at 255-278 is linker 12; the sequence is QTQIQDTSVIVQMDNNRQLDLDNI. Residues 279–417 form a coil 2 region; it reads IAEVRAQYED…ATYRKLLEGE (139 aa). The tract at residues 418 to 497 is tail; it reads ESRLASGIQA…VSERSNIVKE (80 aa).

Belongs to the intermediate filament family. In terms of assembly, heterotetramer of two type I and two type II keratins. Keratin-8 associates with keratin-18. In terms of tissue distribution, expressed in skin.

The protein resides in the cytoplasm. The protein localises to the nucleus. It localises to the nucleoplasm. Its subcellular location is the nucleus matrix. Its function is as follows. Together with KRT19, helps to link the contractile apparatus to dystrophin at the costameres of striated muscle. This Protopterus aethiopicus (Marbled lungfish) protein is Keratin, type II cytoskeletal 8.